The primary structure comprises 176 residues: NAD(P)H-quinone oxidoreductase subunit 6, chloroplastic (176 aa).

Helical transmembrane passes span 10-30 (ILLV…VLLT), 32-52 (PIYS…FHIP), 61-81 (AQLL…VMFM), 107-127 (ILFS…IWTT), and 152-172 (FYLP…GAIA).

The protein belongs to the complex I subunit 6 family. As to quaternary structure, NDH is composed of at least 16 different subunits, 5 of which are encoded in the nucleus.

It localises to the plastid. It is found in the chloroplast thylakoid membrane. It carries out the reaction a plastoquinone + NADH + (n+1) H(+)(in) = a plastoquinol + NAD(+) + n H(+)(out). The enzyme catalyses a plastoquinone + NADPH + (n+1) H(+)(in) = a plastoquinol + NADP(+) + n H(+)(out). NDH shuttles electrons from NAD(P)H:plastoquinone, via FMN and iron-sulfur (Fe-S) centers, to quinones in the photosynthetic chain and possibly in a chloroplast respiratory chain. The immediate electron acceptor for the enzyme in this species is believed to be plastoquinone. Couples the redox reaction to proton translocation, and thus conserves the redox energy in a proton gradient. This is NAD(P)H-quinone oxidoreductase subunit 6, chloroplastic (ndhG) from Calycanthus floridus var. glaucus (Eastern sweetshrub).